The sequence spans 186 residues: Peptidyl-tRNA hydrolase (186 aa).

Tyr15 is a tRNA binding site. His20 (proton acceptor) is an active-site residue. The tRNA site is built by Tyr64, Asn66, and Asn112.

The protein belongs to the PTH family. As to quaternary structure, monomer.

It is found in the cytoplasm. The enzyme catalyses an N-acyl-L-alpha-aminoacyl-tRNA + H2O = an N-acyl-L-amino acid + a tRNA + H(+). Its function is as follows. Hydrolyzes ribosome-free peptidyl-tRNAs (with 1 or more amino acids incorporated), which drop off the ribosome during protein synthesis, or as a result of ribosome stalling. In terms of biological role, catalyzes the release of premature peptidyl moieties from peptidyl-tRNA molecules trapped in stalled 50S ribosomal subunits, and thus maintains levels of free tRNAs and 50S ribosomes. In Azobacteroides pseudotrichonymphae genomovar. CFP2, this protein is Peptidyl-tRNA hydrolase.